The sequence spans 418 residues: Serine hydroxymethyltransferase (418 aa).

(6S)-5,6,7,8-tetrahydrofolate-binding positions include L121 and 125-127 (GHL). K230 carries the N6-(pyridoxal phosphate)lysine modification. (6S)-5,6,7,8-tetrahydrofolate is bound at residue 356-358 (SPF).

Belongs to the SHMT family. Homodimer. Pyridoxal 5'-phosphate serves as cofactor.

The protein localises to the cytoplasm. The catalysed reaction is (6R)-5,10-methylene-5,6,7,8-tetrahydrofolate + glycine + H2O = (6S)-5,6,7,8-tetrahydrofolate + L-serine. It functions in the pathway one-carbon metabolism; tetrahydrofolate interconversion. The protein operates within amino-acid biosynthesis; glycine biosynthesis; glycine from L-serine: step 1/1. In terms of biological role, catalyzes the reversible interconversion of serine and glycine with tetrahydrofolate (THF) serving as the one-carbon carrier. This reaction serves as the major source of one-carbon groups required for the biosynthesis of purines, thymidylate, methionine, and other important biomolecules. Also exhibits THF-independent aldolase activity toward beta-hydroxyamino acids, producing glycine and aldehydes, via a retro-aldol mechanism. The polypeptide is Serine hydroxymethyltransferase (Alteromonas mediterranea (strain DSM 17117 / CIP 110805 / LMG 28347 / Deep ecotype)).